We begin with the raw amino-acid sequence, 378 residues long: Erythronate-4-phosphate dehydrogenase (378 aa).

Positions 45 and 66 each coordinate substrate. The NAD(+) site is built by Asp-146 and Thr-175. Arg-208 is a catalytic residue. Asp-232 serves as a coordination point for NAD(+). Glu-237 is a catalytic residue. His-254 serves as the catalytic Proton donor. Gly-257 contributes to the NAD(+) binding site. Tyr-258 is a binding site for substrate.

This sequence belongs to the D-isomer specific 2-hydroxyacid dehydrogenase family. PdxB subfamily. Homodimer.

Its subcellular location is the cytoplasm. The catalysed reaction is 4-phospho-D-erythronate + NAD(+) = (R)-3-hydroxy-2-oxo-4-phosphooxybutanoate + NADH + H(+). It participates in cofactor biosynthesis; pyridoxine 5'-phosphate biosynthesis; pyridoxine 5'-phosphate from D-erythrose 4-phosphate: step 2/5. In terms of biological role, catalyzes the oxidation of erythronate-4-phosphate to 3-hydroxy-2-oxo-4-phosphonooxybutanoate. The protein is Erythronate-4-phosphate dehydrogenase of Klebsiella pneumoniae (strain 342).